We begin with the raw amino-acid sequence, 211 residues long: N-(5'-phosphoribosyl)anthranilate isomerase (211 aa).

This sequence belongs to the TrpF family.

It catalyses the reaction N-(5-phospho-beta-D-ribosyl)anthranilate = 1-(2-carboxyphenylamino)-1-deoxy-D-ribulose 5-phosphate. It participates in amino-acid biosynthesis; L-tryptophan biosynthesis; L-tryptophan from chorismate: step 3/5. The chain is N-(5'-phosphoribosyl)anthranilate isomerase from Nitrosomonas europaea (strain ATCC 19718 / CIP 103999 / KCTC 2705 / NBRC 14298).